Reading from the N-terminus, the 205-residue chain is Dephospho-CoA kinase (205 aa).

One can recognise a DPCK domain in the interval 15 to 205 (VIGLTGGIAT…VERALDQASI (191 aa)). 23-28 (ATGKST) is an ATP binding site.

Belongs to the CoaE family.

The protein resides in the cytoplasm. It carries out the reaction 3'-dephospho-CoA + ATP = ADP + CoA + H(+). The protein operates within cofactor biosynthesis; coenzyme A biosynthesis; CoA from (R)-pantothenate: step 5/5. Catalyzes the phosphorylation of the 3'-hydroxyl group of dephosphocoenzyme A to form coenzyme A. This chain is Dephospho-CoA kinase, found in Gloeobacter violaceus (strain ATCC 29082 / PCC 7421).